Reading from the N-terminus, the 278-residue chain is MGSTSTPDSSTNRLQDKVAIITGGAGGIGETTAKLFVRYGAKVVIADIADDHGQKVCNNIGSPDVISFVHCDVTKDEDVRNLVDTTIAKHGKLDIMFGNVGVLSTTPYSILEAGNEDFKRVMDINVYGAFLVAKHAARVMIPAKKGSIVFTASISSFTAGEGVSHVYTATKHAVLGLTTSLCTELGEYGIRVNCVSPYIVASPLLTDVFGVDSSRVEELAHQAANLKGTLLRAEDVADAVAYLAGDESKYVSGLNLVIDGGYTRTNPAFPTALKHGLA.

NAD(+) contacts are provided by residues 23 to 28 (GGAGGI), Asp-47, Val-73, and Asn-99. Positions 104 and 164 each coordinate substrate. The Proton donor/acceptor role is filled by Tyr-167. Residues Lys-171 and Val-200 each contribute to the NAD(+) site.

This sequence belongs to the short-chain dehydrogenases/reductases (SDR) family. As to quaternary structure, homotetramer.

The catalysed reaction is (-)-secoisolariciresinol + 2 NAD(+) = (-)-matairesinol + 2 NADH + 2 H(+). In terms of biological role, oxidoreductase involved in lignan biosynthesis. Catalyzes the stereospecific conversion of (-)-secoisolariciresinol to (-)-matairesinol via a lactol intermediate. This chain is Secoisolariciresinol dehydrogenase, found in Podophyllum peltatum (American mandrake).